We begin with the raw amino-acid sequence, 106 residues long: Trp operon repressor homolog (106 aa).

The DNA-binding element occupies 59 to 82 (QREIQQILNTSAATITRGSNMIKI).

The protein belongs to the TrpR family. As to quaternary structure, homodimer.

The protein localises to the cytoplasm. Functionally, this protein is an aporepressor. When complexed with L-tryptophan it binds the operator region of the trp operon and prevents the initiation of transcription. This chain is Trp operon repressor homolog, found in Histophilus somni (strain 129Pt) (Haemophilus somnus).